The sequence spans 260 residues: Indole-3-glycerol phosphate synthase (260 aa).

Belongs to the TrpC family.

The enzyme catalyses 1-(2-carboxyphenylamino)-1-deoxy-D-ribulose 5-phosphate + H(+) = (1S,2R)-1-C-(indol-3-yl)glycerol 3-phosphate + CO2 + H2O. It participates in amino-acid biosynthesis; L-tryptophan biosynthesis; L-tryptophan from chorismate: step 4/5. This is Indole-3-glycerol phosphate synthase from Chloroherpeton thalassium (strain ATCC 35110 / GB-78).